The following is a 391-amino-acid chain: Multidrug resistance protein MdtL (391 aa).

Residues 1–3 (MSR) are Cytoplasmic-facing. Residues 4 to 24 (FLICSFALVLLYPAGIDMYLV) form a helical membrane-spanning segment. Over 25–37 (GLPRIAADLNASE) the chain is Periplasmic. The helical transmembrane segment at 38–58 (AQLHIAFSVYLAGMAAAMLFA) threads the bilayer. Topologically, residues 59 to 75 (GKMADRSGRKPVAIPGS) are cytoplasmic. A helical membrane pass occupies residues 76–96 (ALFIIASVFCSLAETSTLFLA). The Periplasmic portion of the chain corresponds to 97–98 (GR). The chain crosses the membrane as a helical span at residues 99–119 (FLQGLGAGCCYVVAFAILRDT). The Cytoplasmic portion of the chain corresponds to 120–130 (LDDRRRAKVLS). The helical transmembrane segment at 131–151 (LLNGITCIIPVLAPVLGHLIM) threads the bilayer. Residues 152–157 (LKFPWQ) are Periplasmic-facing. Residues 158–178 (SLFWAMAMMGIAVLMLSLFIL) traverse the membrane as a helical segment. The Cytoplasmic portion of the chain corresponds to 179 to 202 (KETRPASPAASDKPRENSESLLNR). Residues 203 to 222 (FFLSRVVITTLSVSVILTFV) traverse the membrane as a helical segment. Topologically, residues 223–244 (NTSPVLLMEIMGFERGEYATIM) are periplasmic. The chain crosses the membrane as a helical span at residues 245-265 (ALTAGVSMTFSFSTPFALGIF). Residues 266–268 (KPR) are Cytoplasmic-facing. Residues 269–289 (TLMITSQVLFLAAGITLAVSP) form a helical membrane-spanning segment. Over 290–292 (SHA) the chain is Periplasmic. Residues 293–313 (VSLFGITLICAGFSVGFGVAM) form a helical membrane-spanning segment. Over 314–330 (SQALGPFSLRAGVASST) the chain is Cytoplasmic. The chain crosses the membrane as a helical span at residues 331–351 (LGIAQVCGSSLWIWLAAVVGI). At 352 to 355 (GAWN) the chain is on the periplasmic side. Residues 356–376 (MLIGILIACSIVSLLLIMFVA) form a helical membrane-spanning segment. At 377 to 391 (PGRPVAAHEEIHHHA) the chain is on the cytoplasmic side.

Belongs to the major facilitator superfamily. DHA1 family. MdtL (TC 2.A.1.2.22) subfamily.

It is found in the cell inner membrane. The protein is Multidrug resistance protein MdtL of Shigella flexneri serotype 5b (strain 8401).